The sequence spans 412 residues: Burnettramic acids biosynthesis cluster protein E (412 aa).

3 disordered regions span residues 1–66, 308–342, and 386–412; these read MAIA…KKIR, RNPT…SLAT, and SRAE…AAKG. Residues 36 to 58 are compositionally biased toward acidic residues; it reads EDEQWALDELQDELCQEEPSDSE. Positions 395–404 are enriched in polar residues; the sequence is EATTEPSVQS.

The protein operates within mycotoxin biosynthesis. Part of the gene cluster that mediates the biosynthesis of burnettramic acids, an unusual class of bolaamphiphilic pyrrolizidinediones that display potent antibacterial, antifungal, and cytotoxic activities. The first step of the biosynthesis of burnettramic acids is the hydroxylation of proline by the proline hydroxylase buaE to generate 4-hydroxyproline. The PKS-NRPS buaA and trans-enoyl reductase buaC construct the highly reduced polyketide chain, and the condensation (C) domain of buaA then catalyzes the amide bond formation with the activated 4-hydroxyproline. This is followed by the R domain releasing the nascent polyketide-peptide directly via a Dieckmann condensation to afford a tetramic acid fused to the hydroxyproline, generating the bicyclic pyrrolidinedione moiety. The cytochrome P450 monooxygenases buaD and buaG are likely responsible for the multiple hydroxylations on the polyketide chain and its terminus, although in the heterologous context, buaD does not appear to be required. Therefore, while buaG may be a multifunctional cytochrome P450 monooxygenase, it cannot be ruled out that the two secondary alcohols on the polyketide chain could have an acetate origin. Finally, the glycosyltransferase buaB transfers beta-D-mannose to the aglycone burnettramic acid A to form burnettramic acid A. Burnettramic acid B is a minor cis-pyrrolizidine epimer of burnettramic acid A and it is likely that small amounts of it form naturally in acidic environments. The role of the uncharacterized protein buaF in the biosynthesis of burnettramic acids has still to be determined. The sequence is that of Burnettramic acids biosynthesis cluster protein E from Petromyces alliaceus (Aspergillus alliaceus).